Reading from the N-terminus, the 102-residue chain is ATP-dependent Clp protease adapter protein ClpS (102 aa).

The protein belongs to the ClpS family. In terms of assembly, binds to the N-terminal domain of the chaperone ClpA.

Involved in the modulation of the specificity of the ClpAP-mediated ATP-dependent protein degradation. This chain is ATP-dependent Clp protease adapter protein ClpS, found in Shewanella amazonensis (strain ATCC BAA-1098 / SB2B).